Here is a 1165-residue protein sequence, read N- to C-terminus: MICQKFCVVLLHWEFIYVITAFNLSYPITPWRFKLSCMPPNSTYDYFLLPAGLSKNTSNSNGHYETAVEPKFNSSGTHFSNLSKTTFHCCFRSEQDRNCSLCADNIEGKTFVSTVNSLVFQQIDANWNIQCWLKGDLKLFICYVESLFKNLFRNYNYKVHLLYVLPEVLEDSPLVPQKGSFQMVHCNCSVHECCECLVPVPTAKLNDTLLMCLKITSGGVIFQSPLMSVQPINMVKPDPPLGLHMEITDDGNLKISWSSPPLVPFPLQYQVKYSENSTTVIREADKIVSATSLLVDSILPGSSYEVQVRGKRLDGPGIWSDWSTPRVFTTQDVIYFPPKILTSVGSNVSFHCIYKKENKIVPSKEIVWWMNLAEKIPQSQYDVVSDHVSKVTFFNLNETKPRGKFTYDAVYCCNEHECHHRYAELYVIDVNINISCETDGYLTKMTCRWSTSTIQSLAESTLQLRYHRSSLYCSDIPSIHPISEPKDCYLQSDGFYECIFQPIFLLSGYTMWIRINHSLGSLDSPPTCVLPDSVVKPLPPSSVKAEITINIGLLKISWEKPVFPENNLQFQIRYGLSGKEVQWKMYEVYDAKSKSVSLPVPDLCAVYAVQVRCKRLDGLGYWSNWSNPAYTVVMDIKVPMRGPEFWRIINGDTMKKEKNVTLLWKPLMKNDSLCSVQRYVINHHTSCNGTWSEDVGNHTKFTFLWTEQAHTVTVLAINSIGASVANFNLTFSWPMSKVNIVQSLSAYPLNSSCVIVSWILSPSDYKLMYFIIEWKNLNEDGEIKWLRISSSVKKYYIHDHFIPIEKYQFSLYPIFMEGVGKPKIINSFTQDDIEKHQSDAGLYVIVPVIISSSILLLGTLLISHQRMKKLFWEDVPNPKNCSWAQGLNFQKPETFEHLFIKHTASVTCGPLLLEPETISEDISVDTSWKNKDEMMPTTVVSLLSTTDLEKGSVCISDQFNSVNFSEAEGTEVTYEDESQRQPFVKYATLISNSKPSETGEEQGLINSSVTKCFSSKNSPLKDSFSNSSWEIEAQAFFILSDQHPNIISPHLTFSEGLDELLKLEGNFPEENNDKKSIYYLGVTSIKKRESGVLLTDKSRVSCPFPAPCLFTDIRVLQDSCSHFVENNINLGTSSKKTFASYMPQFQTCSTQTHKIMENKMCDLTV.

The first 21 residues, Met-1 to Ala-21, serve as a signal peptide directing secretion. Residues Phe-22–Asp-839 lie on the Extracellular side of the membrane. N-linked (GlcNAc...) asparagine glycosylation is found at Asn-23, Asn-41, Asn-56, Asn-73, Asn-81, and Asn-98. Cystine bridges form between Cys-37–Cys-90, Cys-89–Cys-99, Cys-131–Cys-142, Cys-186–Cys-196, and Cys-188–Cys-193. N-linked (GlcNAc...) asparagine glycosylation occurs at Asn-187. Residues Asn-206, Asn-276, Asn-347, and Asn-397 are each glycosylated (N-linked (GlcNAc...) asparagine). The 95-residue stretch at Pro-239–Val-333 folds into the Fibronectin type-III 1 domain. Positions Gln-331–Asp-429 constitute an Ig-like domain. Cystine bridges form between Cys-352–Cys-412, Cys-413–Cys-418, Cys-436–Cys-447, Cys-473–Cys-528, and Cys-488–Cys-498. The interval His-467–Glu-484 is leptin-binding. Asn-516, Asn-624, Asn-659, Asn-688, Asn-697, Asn-728, and Asn-750 each carry an N-linked (GlcNAc...) asparagine glycan. 3 consecutive Fibronectin type-III domains span residues Pro-539–Met-634, Pro-639–Ser-732, and Ile-740–Ile-833. The WSXWS motif signature appears at Trp-622–Ser-626. A helical membrane pass occupies residues Ala-840–Ile-862. Over Ser-863 to Val-1165 the chain is Cytoplasmic. Residues Phe-871 to Lys-879 carry the Box 1 motif motif. Position 882 is a phosphoserine (Ser-882). The interval Glu-893 to Leu-898 is required for JAK2 activation. Positions Leu-898 to Val-906 are required for STAT3 phosphorylation. Residue Tyr-986 is modified to Phosphotyrosine; by JAK2. A Phosphotyrosine modification is found at Tyr-1079. Tyr-1141 carries the phosphotyrosine; by JAK2 modification.

The protein belongs to the type I cytokine receptor family. Type 2 subfamily. In terms of assembly, present as a mixture of monomers and dimers. The phosphorylated receptor binds a number of SH2 domain-containing proteins such as JAK2, STAT3, PTPN11, and SOCS3. Interaction with SOCS3 inhibits JAK/STAT signaling and MAPK cascade. On ligand binding, phosphorylated on two conserved C-terminal tyrosine residues (isoform B only) by JAK2. Tyr-986 is required for complete binding and activation of PTPN11, ERK/FOS activation,for interaction with SOCS3 and SOCS3 mediated inhibition of leptin signaling. Phosphorylation on Tyr-1141 is required for STAT3 binding/activation. Phosphorylation of Tyr-1079 has a more accessory role. As to expression, isoform A is expressed in fetal liver and in hematopoietic tissues and choroid plexus. In adults highest expression in heart, liver, small intestine, prostate and ovary. Low level in lung and kidney. Isoform B is highly expressed in hypothalamus, but also in skeletal muscle. Detected in fundic and antral epithelial cells of the gastric mucosa. Isoform B and isoform A are expressed by NK cells (at protein level).

It is found in the cell membrane. Its subcellular location is the basolateral cell membrane. The protein resides in the secreted. Functionally, receptor for hormone LEP/leptin. On ligand binding, mediates LEP central and peripheral effects through the activation of different signaling pathways such as JAK2/STAT3 and MAPK cascade/FOS. In the hypothalamus, LEP acts as an appetite-regulating factor that induces a decrease in food intake and an increase in energy consumption by inducing anorexinogenic factors and suppressing orexigenic neuropeptides, also regulates bone mass and secretion of hypothalamo-pituitary-adrenal hormones. In the periphery, increases basal metabolism, influences reproductive function, regulates pancreatic beta-cell function and insulin secretion, is pro-angiogenic and affects innate and adaptive immunity. Control of energy homeostasis and melanocortin production (stimulation of POMC and full repression of AgRP transcription) is mediated by STAT3 signaling, whereas distinct signals regulate NPY and the control of fertility, growth and glucose homeostasis. Involved in the regulation of counter-regulatory response to hypoglycemia by inhibiting neurons of the parabrachial nucleus. Has a specific effect on T lymphocyte responses, differentially regulating the proliferation of naive and memory T -ells. Leptin increases Th1 and suppresses Th2 cytokine production. May transport LEP across the blood-brain barrier. Binds LEP and mediates LEP endocytosis. Does not induce phosphorylation of and activate STAT3. Its function is as follows. Antagonizes Isoform A and isoform B-mediated LEP binding and endocytosis. This is Leptin receptor (LEPR) from Homo sapiens (Human).